Consider the following 210-residue polypeptide: Actin-related protein 3C (210 aa).

A signal peptide spans 1–21; that stretch reads MFESFNVPGLYIAVQAVLALA.

The protein belongs to the actin family. As to expression, expressed in kidney, stomach, spleen, bone marrow, uterus, testis, placenta, skeletal muscle, mammary gland, lung, fetal liver, and fetal kidney, but not detected in small intestine, brain, and thymus. Expressed in low-metastatic lung adenocarcinoma cells but not in high-metastatic ones.

Its function is as follows. May play a role in the suppression of metastatic potential in lung adenoma carcinoma cells. The polypeptide is Actin-related protein 3C (ACTR3C) (Homo sapiens (Human)).